Here is a 277-residue protein sequence, read N- to C-terminus: Acetyl-coenzyme A carboxylase carboxyl transferase subunit beta (277 aa).

The 253-residue stretch at 25 to 277 (LVRRCPVCHT…DLLRLHKGES (253 aa)) folds into the CoA carboxyltransferase N-terminal domain. C29, C32, C47, and C50 together coordinate Zn(2+). The C4-type zinc-finger motif lies at 29–50 (CPVCHTTFLTDHWEPTRLCPAC).

This sequence belongs to the AccD/PCCB family. In terms of assembly, acetyl-CoA carboxylase is a heterohexamer composed of biotin carboxyl carrier protein (AccB), biotin carboxylase (AccC) and two subunits each of ACCase subunit alpha (AccA) and ACCase subunit beta (AccD). Zn(2+) serves as cofactor.

The protein resides in the cytoplasm. The enzyme catalyses N(6)-carboxybiotinyl-L-lysyl-[protein] + acetyl-CoA = N(6)-biotinyl-L-lysyl-[protein] + malonyl-CoA. The protein operates within lipid metabolism; malonyl-CoA biosynthesis; malonyl-CoA from acetyl-CoA: step 1/1. Its function is as follows. Component of the acetyl coenzyme A carboxylase (ACC) complex. Biotin carboxylase (BC) catalyzes the carboxylation of biotin on its carrier protein (BCCP) and then the CO(2) group is transferred by the transcarboxylase to acetyl-CoA to form malonyl-CoA. The chain is Acetyl-coenzyme A carboxylase carboxyl transferase subunit beta from Levilactobacillus brevis (strain ATCC 367 / BCRC 12310 / CIP 105137 / JCM 1170 / LMG 11437 / NCIMB 947 / NCTC 947) (Lactobacillus brevis).